Consider the following 185-residue polypeptide: ATP-dependent protease subunit HslV (185 aa).

Residue Thr12 is part of the active site. 3 residues coordinate Na(+): Ala168, Cys171, and Thr174.

Belongs to the peptidase T1B family. HslV subfamily. In terms of assembly, a double ring-shaped homohexamer of HslV is capped on each side by a ring-shaped HslU homohexamer. The assembly of the HslU/HslV complex is dependent on binding of ATP.

The protein resides in the cytoplasm. The catalysed reaction is ATP-dependent cleavage of peptide bonds with broad specificity.. Allosterically activated by HslU binding. Functionally, protease subunit of a proteasome-like degradation complex believed to be a general protein degrading machinery. The sequence is that of ATP-dependent protease subunit HslV from Roseobacter denitrificans (strain ATCC 33942 / OCh 114) (Erythrobacter sp. (strain OCh 114)).